The primary structure comprises 175 residues: FOXL2 neighbor protein (175 aa).

Disordered regions lie at residues 1–39 (MTRT…PALV) and 70–100 (AQKT…GKRR).

This Homo sapiens (Human) protein is FOXL2 neighbor protein (FOXL2NB).